The following is a 217-amino-acid chain: Probable transaldolase (217 aa).

The Schiff-base intermediate with substrate role is filled by Lys-83.

The protein belongs to the transaldolase family. Type 3B subfamily.

The protein resides in the cytoplasm. It carries out the reaction D-sedoheptulose 7-phosphate + D-glyceraldehyde 3-phosphate = D-erythrose 4-phosphate + beta-D-fructose 6-phosphate. It functions in the pathway carbohydrate degradation; pentose phosphate pathway; D-glyceraldehyde 3-phosphate and beta-D-fructose 6-phosphate from D-ribose 5-phosphate and D-xylulose 5-phosphate (non-oxidative stage): step 2/3. Transaldolase is important for the balance of metabolites in the pentose-phosphate pathway. This is Probable transaldolase from Sinorhizobium medicae (strain WSM419) (Ensifer medicae).